A 328-amino-acid chain; its full sequence is Alanine racemase (328 aa).

Residue K33 is the Proton acceptor; specific for D-alanine of the active site. Residue K33 is modified to N6-(pyridoxal phosphate)lysine. Residue R118 coordinates substrate. The active-site Proton acceptor; specific for L-alanine is the Y237. Residue M283 coordinates substrate.

This sequence belongs to the alanine racemase family. Requires pyridoxal 5'-phosphate as cofactor.

It carries out the reaction L-alanine = D-alanine. It participates in amino-acid biosynthesis; D-alanine biosynthesis; D-alanine from L-alanine: step 1/1. Catalyzes the interconversion of L-alanine and D-alanine. May also act on other amino acids. In Campylobacter jejuni subsp. jejuni serotype O:23/36 (strain 81-176), this protein is Alanine racemase (alr).